The primary structure comprises 169 residues: Cell division inhibitor SulA (169 aa).

The span at 1 to 13 (MFTSAHANRSAQA) shows a compositional bias: polar residues. A disordered region spans residues 1-26 (MFTSAHANRSAQASAPAGHYAHRSGE). The segment at 106 to 112 (ALRTGNY) is ftsZ binding. The interval 162–169 (KIHSNLYH) is lon protease binding.

This sequence belongs to the SulA family. As to quaternary structure, interacts with FtsZ. In terms of processing, is rapidly cleaved and degraded by the Lon protease once DNA damage is repaired.

Component of the SOS system and an inhibitor of cell division. Accumulation of SulA causes rapid cessation of cell division and the appearance of long, non-septate filaments. In the presence of GTP, binds a polymerization-competent form of FtsZ in a 1:1 ratio, thus inhibiting FtsZ polymerization and therefore preventing it from participating in the assembly of the Z ring. This mechanism prevents the premature segregation of damaged DNA to daughter cells during cell division. This chain is Cell division inhibitor SulA, found in Klebsiella pneumoniae subsp. pneumoniae (strain ATCC 700721 / MGH 78578).